Here is a 918-residue protein sequence, read N- to C-terminus: Leucine--tRNA ligase (918 aa).

Residues 40-51 carry the 'HIGH' region motif; the sequence is PYPSGVGLHVGH. Positions 692 to 696 match the 'KMSKS' region motif; sequence KMSKS. Lysine 695 is a binding site for ATP.

This sequence belongs to the class-I aminoacyl-tRNA synthetase family.

The protein resides in the cytoplasm. It carries out the reaction tRNA(Leu) + L-leucine + ATP = L-leucyl-tRNA(Leu) + AMP + diphosphate. This chain is Leucine--tRNA ligase, found in Azobacteroides pseudotrichonymphae genomovar. CFP2.